The following is a 308-amino-acid chain: N-acetylmuramic acid 6-phosphate etherase (308 aa).

In terms of domain architecture, SIS spans 63-226 (IVDAFACGGR…STASMIRSGK (164 aa)). The active-site Proton donor is the glutamate 91. Glutamate 122 is an active-site residue.

It belongs to the GCKR-like family. MurNAc-6-P etherase subfamily. As to quaternary structure, homodimer.

It catalyses the reaction N-acetyl-D-muramate 6-phosphate + H2O = N-acetyl-D-glucosamine 6-phosphate + (R)-lactate. It participates in amino-sugar metabolism; 1,6-anhydro-N-acetylmuramate degradation. Its pathway is amino-sugar metabolism; N-acetylmuramate degradation. It functions in the pathway cell wall biogenesis; peptidoglycan recycling. In terms of biological role, specifically catalyzes the cleavage of the D-lactyl ether substituent of MurNAc 6-phosphate, producing GlcNAc 6-phosphate and D-lactate. Together with AnmK, is also required for the utilization of anhydro-N-acetylmuramic acid (anhMurNAc) either imported from the medium or derived from its own cell wall murein, and thus plays a role in cell wall recycling. In Colwellia psychrerythraea (strain 34H / ATCC BAA-681) (Vibrio psychroerythus), this protein is N-acetylmuramic acid 6-phosphate etherase.